Reading from the N-terminus, the 122-residue chain is Large ribosomal subunit protein uL18 (122 aa).

This sequence belongs to the universal ribosomal protein uL18 family. As to quaternary structure, part of the 50S ribosomal subunit; part of the 5S rRNA/L5/L18/L25 subcomplex. Contacts the 5S and 23S rRNAs.

In terms of biological role, this is one of the proteins that bind and probably mediate the attachment of the 5S RNA into the large ribosomal subunit, where it forms part of the central protuberance. This Petrotoga mobilis (strain DSM 10674 / SJ95) protein is Large ribosomal subunit protein uL18.